We begin with the raw amino-acid sequence, 278 residues long: Tetraspanin-13 (278 aa).

At 1-25 (MARDKEDQNNENPSIVQNMSFPFNT) the chain is on the cytoplasmic side. A helical membrane pass occupies residues 26–46 (IFLISSAIFLVTAAFWFVAVM). Topologically, residues 47–62 (TLHYRTDECNRFVTTP) are extracellular. The chain crosses the membrane as a helical span at residues 63-83 (GIFISFSLLAMSLTGFYAAYF). The Cytoplasmic portion of the chain corresponds to 84–92 (KSDCLFRIH). Residues 93–113 (FFIFFLWMFVVVSKAIFVIFL) form a helical membrane-spanning segment. Over 114 to 249 (HKETNPRLFP…DVHNTSFSIT (136 aa)) the chain is Extracellular. 3 N-linked (GlcNAc...) asparagine glycosylation sites follow: N202, N220, and N243. The helical transmembrane segment at 250–270 (VNIIHIIFSLCIGMTGWFAWL) threads the bilayer. Residues 271-278 (RILRESQK) lie on the Cytoplasmic side of the membrane.

Belongs to the tetraspanin (TM4SF) family.

It localises to the membrane. Functionally, may be involved in the regulation of cell differentiation. This chain is Tetraspanin-13 (TET13), found in Arabidopsis thaliana (Mouse-ear cress).